The chain runs to 729 residues: Polyribonucleotide nucleotidyltransferase (729 aa).

Residues aspartate 485 and aspartate 491 each coordinate Mg(2+). The KH domain maps to 552-611; it reads PRITTMKVAEDKIRTIIGKGGATIKGLIESTGVSIDIDDSGVVQLFSPDKMALEEAQKQI. The S1 motif domain occupies 621–689; the sequence is GQTYQGKVSK…KQGRVKLEWK (69 aa).

Belongs to the polyribonucleotide nucleotidyltransferase family. Component of the RNA degradosome, which is a multiprotein complex involved in RNA processing and mRNA degradation. Mg(2+) serves as cofactor.

It is found in the cytoplasm. The catalysed reaction is RNA(n+1) + phosphate = RNA(n) + a ribonucleoside 5'-diphosphate. Functionally, involved in mRNA degradation. Catalyzes the phosphorolysis of single-stranded polyribonucleotides processively in the 3'- to 5'-direction. The chain is Polyribonucleotide nucleotidyltransferase from Legionella pneumophila subsp. pneumophila (strain Philadelphia 1 / ATCC 33152 / DSM 7513).